A 154-amino-acid polypeptide reads, in one-letter code: 6,7-dimethyl-8-ribityllumazine synthase (154 aa).

Residues Phe-26, 60-62 (ALE), and 84-86 (CII) each bind 5-amino-6-(D-ribitylamino)uracil. Residue 89–90 (ET) participates in (2S)-2-hydroxy-3-oxobutyl phosphate binding. His-92 (proton donor) is an active-site residue. Position 117 (Asn-117) interacts with 5-amino-6-(D-ribitylamino)uracil. (2S)-2-hydroxy-3-oxobutyl phosphate is bound at residue Arg-131.

This sequence belongs to the DMRL synthase family.

The catalysed reaction is (2S)-2-hydroxy-3-oxobutyl phosphate + 5-amino-6-(D-ribitylamino)uracil = 6,7-dimethyl-8-(1-D-ribityl)lumazine + phosphate + 2 H2O + H(+). Its pathway is cofactor biosynthesis; riboflavin biosynthesis; riboflavin from 2-hydroxy-3-oxobutyl phosphate and 5-amino-6-(D-ribitylamino)uracil: step 1/2. In terms of biological role, catalyzes the formation of 6,7-dimethyl-8-ribityllumazine by condensation of 5-amino-6-(D-ribitylamino)uracil with 3,4-dihydroxy-2-butanone 4-phosphate. This is the penultimate step in the biosynthesis of riboflavin. In Acidovorax sp. (strain JS42), this protein is 6,7-dimethyl-8-ribityllumazine synthase.